A 198-amino-acid chain; its full sequence is ATP-dependent Clp protease proteolytic subunit (198 aa).

Ser103 (nucleophile) is an active-site residue. His128 is a catalytic residue.

This sequence belongs to the peptidase S14 family. Fourteen ClpP subunits assemble into 2 heptameric rings which stack back to back to give a disk-like structure with a central cavity, resembling the structure of eukaryotic proteasomes.

Its subcellular location is the cytoplasm. It catalyses the reaction Hydrolysis of proteins to small peptides in the presence of ATP and magnesium. alpha-casein is the usual test substrate. In the absence of ATP, only oligopeptides shorter than five residues are hydrolyzed (such as succinyl-Leu-Tyr-|-NHMec, and Leu-Tyr-Leu-|-Tyr-Trp, in which cleavage of the -Tyr-|-Leu- and -Tyr-|-Trp bonds also occurs).. In terms of biological role, cleaves peptides in various proteins in a process that requires ATP hydrolysis. Has a chymotrypsin-like activity. Plays a major role in the degradation of misfolded proteins. This chain is ATP-dependent Clp protease proteolytic subunit, found in Ruthia magnifica subsp. Calyptogena magnifica.